We begin with the raw amino-acid sequence, 177 residues long: Coatomer subunit zeta-1 (177 aa).

The residue at position 1 (Met-1) is an N-acetylmethionine.

It belongs to the adaptor complexes small subunit family. In terms of assembly, oligomeric complex that consists of at least the alpha, beta, beta', gamma, delta, epsilon and zeta subunits.

It is found in the cytoplasm. It localises to the golgi apparatus membrane. The protein resides in the cytoplasmic vesicle. Its subcellular location is the COPI-coated vesicle membrane. In terms of biological role, the coatomer is a cytosolic protein complex that binds to dilysine motifs and reversibly associates with Golgi non-clathrin-coated vesicles, which further mediate biosynthetic protein transport from the ER, via the Golgi up to the trans Golgi network. Coatomer complex is required for budding from Golgi membranes, and is essential for the retrograde Golgi-to-ER transport of dilysine-tagged proteins. The zeta subunit may be involved in regulating the coat assembly and, hence, the rate of biosynthetic protein transport due to its association-dissociation properties with the coatomer complex. The polypeptide is Coatomer subunit zeta-1 (COPZ1) (Bos taurus (Bovine)).